The chain runs to 261 residues: Phosphoadenosine phosphosulfate reductase (261 aa).

This sequence belongs to the PAPS reductase family. CysH subfamily.

It carries out the reaction [thioredoxin]-disulfide + sulfite + adenosine 3',5'-bisphosphate + 2 H(+) = [thioredoxin]-dithiol + 3'-phosphoadenylyl sulfate. The protein operates within sulfur metabolism; hydrogen sulfide biosynthesis; sulfite from sulfate: step 3/3. Functionally, the NADP dependent reduction of PAPS into sulfite involves thioredoxin which probably plays the role of a thiol carrier. The chain is Phosphoadenosine phosphosulfate reductase (MET16) from Saccharomyces cerevisiae (strain ATCC 204508 / S288c) (Baker's yeast).